The following is a 294-amino-acid chain: Syntaxin-19 (294 aa).

A t-SNARE coiled-coil homology domain is found at 209–271 (LSEIEQRHKE…NNTKEKFGLA (63 aa)).

It belongs to the syntaxin family. Interacts with EGFR.

The protein localises to the cell membrane. The protein resides in the cytoplasm. Functionally, plays a role in endosomal trafficking of the epidermal growth factor receptor (EGFR). The chain is Syntaxin-19 (STX19) from Pongo abelii (Sumatran orangutan).